The sequence spans 180 residues: Adenine phosphoribosyltransferase (180 aa).

It belongs to the purine/pyrimidine phosphoribosyltransferase family. As to quaternary structure, homodimer.

It is found in the cytoplasm. It carries out the reaction AMP + diphosphate = 5-phospho-alpha-D-ribose 1-diphosphate + adenine. It functions in the pathway purine metabolism; AMP biosynthesis via salvage pathway; AMP from adenine: step 1/1. Its function is as follows. Catalyzes a salvage reaction resulting in the formation of AMP, that is energically less costly than de novo synthesis. This is Adenine phosphoribosyltransferase from Mycobacterium avium (strain 104).